A 209-amino-acid polypeptide reads, in one-letter code: UPF0174 protein jhp_1493 (209 aa).

Belongs to the UPF0174 family.

The chain is UPF0174 protein jhp_1493 from Helicobacter pylori (strain J99 / ATCC 700824) (Campylobacter pylori J99).